Reading from the N-terminus, the 604-residue chain is Acetylcholinesterase 4 (604 aa).

The first 23 residues, 1-23, serve as a signal peptide directing secretion; that stretch reads MKPKLVFLPFLIFITVFIEESEA. An intrachain disulfide couples cysteine 88 to cysteine 115. Residues asparagine 96 and asparagine 128 are each glycosylated (N-linked (GlcNAc...) asparagine). Serine 219 (acyl-ester intermediate) is an active-site residue. A disulfide bridge connects residues cysteine 273 and cysteine 284. Asparagine 274 and asparagine 299 each carry an N-linked (GlcNAc...) asparagine glycan. Catalysis depends on glutamate 347, which acts as the Charge relay system. 2 N-linked (GlcNAc...) asparagine glycosylation sites follow: asparagine 400 and asparagine 446. Cysteines 426 and 561 form a disulfide. The Charge relay system role is filled by histidine 477.

Belongs to the type-B carboxylesterase/lipase family.

The protein localises to the synapse. It localises to the secreted. The protein resides in the cell membrane. The enzyme catalyses acetylcholine + H2O = choline + acetate + H(+). Rapidly hydrolyzes choline released into the synapse. This chain is Acetylcholinesterase 4 (ace-4), found in Caenorhabditis briggsae.